The following is a 295-amino-acid chain: Trehalose/maltose transport system permease protein MalF (295 aa).

7 helical membrane passes run 16–36, 79–99, 112–132, 146–166, 210–230, 236–256, and 267–287; these read LGYL…ILPV, VSFS…FALI, AIVL…WELM, ILGV…FAIV, ITLP…TIDA, IIYV…SLLA, and IGSA…IVYL. The 212-residue stretch at 75–286 folds into the ABC transmembrane type-1 domain; it reads TFVTVSFSFV…VLVLSFTIVY (212 aa).

It belongs to the binding-protein-dependent transport system permease family. As to quaternary structure, the complex is composed of two ATP-binding proteins (MalK), two transmembrane proteins (MalG and MalF) and a solute-binding protein (MalE).

The protein localises to the cell membrane. Part of the ABC transporter complex MalEFGK involved in trehalose/maltose import. Responsible for the translocation of the substrate across the membrane. In Thermococcus litoralis (strain ATCC 51850 / DSM 5473 / JCM 8560 / NS-C), this protein is Trehalose/maltose transport system permease protein MalF (malF).